Here is a 215-residue protein sequence, read N- to C-terminus: Pyrrolidone-carboxylate peptidase (215 aa).

Active-site residues include Glu-80, Cys-143, and His-167.

This sequence belongs to the peptidase C15 family. Homotetramer.

It is found in the cytoplasm. It catalyses the reaction Release of an N-terminal pyroglutamyl group from a polypeptide, the second amino acid generally not being Pro.. Its function is as follows. Removes 5-oxoproline from various penultimate amino acid residues except L-proline. This is Pyrrolidone-carboxylate peptidase from Bacillus mycoides (strain KBAB4) (Bacillus weihenstephanensis).